Reading from the N-terminus, the 60-residue chain is Small ribosomal subunit protein bS21 (60 aa).

The disordered stretch occupies residues 39-60; that stretch reads ETPQEKRKRKAVARRRQRTRRR. The segment covering 44 to 60 has biased composition (basic residues); that stretch reads KRKRKAVARRRQRTRRR.

It belongs to the bacterial ribosomal protein bS21 family.

The sequence is that of Small ribosomal subunit protein bS21 from Microcystis aeruginosa (strain NIES-843 / IAM M-2473).